Reading from the N-terminus, the 459-residue chain is Ribulose bisphosphate carboxylase large chain (459 aa).

Position 4 is an N6,N6,N6-trimethyllysine (lysine 4). 2 residues coordinate substrate: asparagine 113 and threonine 163. Catalysis depends on lysine 165, which acts as the Proton acceptor. Residue lysine 167 coordinates substrate. Mg(2+)-binding residues include lysine 191, aspartate 193, and glutamate 194. Lysine 191 carries the N6-carboxylysine modification. Histidine 284 serves as the catalytic Proton acceptor. The substrate site is built by arginine 285, histidine 317, and serine 369.

It belongs to the RuBisCO large chain family. Type I subfamily. As to quaternary structure, heterohexadecamer of 8 large chains and 8 small chains; disulfide-linked. The disulfide link is formed within the large subunit homodimers. The cofactor is Mg(2+). Post-translationally, the disulfide bond which can form in the large chain dimeric partners within the hexadecamer appears to be associated with oxidative stress and protein turnover.

The protein resides in the plastid. The protein localises to the chloroplast. The enzyme catalyses 2 (2R)-3-phosphoglycerate + 2 H(+) = D-ribulose 1,5-bisphosphate + CO2 + H2O. It catalyses the reaction D-ribulose 1,5-bisphosphate + O2 = 2-phosphoglycolate + (2R)-3-phosphoglycerate + 2 H(+). Its function is as follows. RuBisCO catalyzes two reactions: the carboxylation of D-ribulose 1,5-bisphosphate, the primary event in carbon dioxide fixation, as well as the oxidative fragmentation of the pentose substrate in the photorespiration process. Both reactions occur simultaneously and in competition at the same active site. The protein is Ribulose bisphosphate carboxylase large chain of Nypa fruticans (Nypa palm).